A 429-amino-acid chain; its full sequence is Serine--tRNA ligase (429 aa).

236–238 (TAE) is an L-serine binding site. 267 to 269 (RSE) contacts ATP. Glu-290 serves as a coordination point for L-serine. Position 354–357 (354–357 (EISS)) interacts with ATP. Ser-390 lines the L-serine pocket.

It belongs to the class-II aminoacyl-tRNA synthetase family. Type-1 seryl-tRNA synthetase subfamily. In terms of assembly, homodimer. The tRNA molecule binds across the dimer.

Its subcellular location is the cytoplasm. It carries out the reaction tRNA(Ser) + L-serine + ATP = L-seryl-tRNA(Ser) + AMP + diphosphate + H(+). The enzyme catalyses tRNA(Sec) + L-serine + ATP = L-seryl-tRNA(Sec) + AMP + diphosphate + H(+). The protein operates within aminoacyl-tRNA biosynthesis; selenocysteinyl-tRNA(Sec) biosynthesis; L-seryl-tRNA(Sec) from L-serine and tRNA(Sec): step 1/1. Catalyzes the attachment of serine to tRNA(Ser). Is also able to aminoacylate tRNA(Sec) with serine, to form the misacylated tRNA L-seryl-tRNA(Sec), which will be further converted into selenocysteinyl-tRNA(Sec). The protein is Serine--tRNA ligase of Photorhabdus laumondii subsp. laumondii (strain DSM 15139 / CIP 105565 / TT01) (Photorhabdus luminescens subsp. laumondii).